Reading from the N-terminus, the 444-residue chain is Citrate-proton symporter (444 aa).

The Cytoplasmic segment spans residues 1–41 (MPTARCSMRASSTAPVRMMATAGGARIGAILRVTSGNFLEQ). The chain crosses the membrane as a helical span at residues 42–62 (FDFFLFGFYATYIAHTFFPAS). Residues 63–72 (SEFASLMMTF) lie on the Periplasmic side of the membrane. A helical transmembrane segment spans residues 73-93 (AVFGAGFLMRPIGAIVLGAYI). Over 94-114 (DKVGRRKGLIVTLSIMATGTF) the chain is Cytoplasmic. The chain crosses the membrane as a helical span at residues 115 to 135 (LIVLIPSYQTIGLWAPLLVLI). Over 136–137 (GR) the chain is Periplasmic. The chain crosses the membrane as a helical span at residues 138 to 158 (LLQGFSAGAELGGVSVYLAEI). The Cytoplasmic segment spans residues 159 to 177 (ATPGRKGFYTSWQSGSQQV). The helical transmembrane segment at 178-198 (AIMVAAAMGFALNAVLEPSAI) threads the bilayer. Ser-199 is a topological domain (periplasmic). Residues 200-220 (DWGWRIPFLFGVLIVPFIFIL) traverse the membrane as a helical segment. At 221–251 (RRKLEETQEFTARRHHLAMRQVFATLLANWQ) the chain is on the cytoplasmic side. The helical transmembrane segment at 252-272 (VVIAGMMMVAMTTTAFYLITV) threads the bilayer. Topologically, residues 273–289 (YAPTFGKKVLMLSASDS) are periplasmic. Residues 290–310 (LLVTLLVAISNFFWLPVGGAL) traverse the membrane as a helical segment. Topologically, residues 311–318 (SDRFGRRS) are cytoplasmic. Residues 319 to 339 (VLIAMTLLALATAWPALTMLA) traverse the membrane as a helical segment. A topological domain (periplasmic) is located at residue Asn-340. Residues 341–361 (APSFLMMLSVLLWLSFIYGMY) traverse the membrane as a helical segment. At 362-379 (NGAMIPALTEIMPAEVRV) the chain is on the cytoplasmic side. Residues 380–400 (AGFSLAYSLATAVFGGFTPVI) form a helical membrane-spanning segment. The Periplasmic segment spans residues 401 to 411 (STALIEYTGDK). A helical transmembrane segment spans residues 412–432 (ASPGYWMSFAAICGLLATCYL). Residues 433 to 444 (YRRSAVALQTAR) are Cytoplasmic-facing.

The protein belongs to the major facilitator superfamily. Metabolite:H+ Symporter (MHS) family (TC 2.A.1.6) family.

The protein resides in the cell inner membrane. In terms of biological role, uptake of citrate across the boundary membrane with the concomitant transport of protons into the cell (symport system). The polypeptide is Citrate-proton symporter (citH) (Klebsiella pneumoniae).